Reading from the N-terminus, the 1103-residue chain is Ataxin-2 homolog (1103 aa).

Residues 1–10 (MSQSKDKKKF) are compositionally biased toward basic residues. Residues 1–75 (MSQSKDKKKF…QQQQQQQQPF (75 aa)) form a disordered region. Residues 11–28 (VGGGGGGGGNNSGGGGYG) show a composition bias toward gly residues. Low complexity-rich tracts occupy residues 33 to 44 (NNNNNNRNSSNN) and 56 to 73 (HHQQ…QQQQ). Residues 84-166 (RTVFMSMSLV…FLQITATGVV (83 aa)) form the Sm domain. Residues 258-287 (EFYKINQSVAEKKAQEIENEKSGNIHLLEE) adopt a coiled-coil conformation. 5 disordered regions span residues 305–474 (VVRK…RESP), 516–557 (TNKS…APKS), 615–763 (LVIK…NNTT), 901–920 (HTMK…VQPQ), and 930–1103 (QPQG…NQYH). The segment covering 312–356 (PTSTTSTTTSPPTQNPTPSSSVYIPPSKRNNNNNTPSTPSVTSPP) has biased composition (low complexity). Residues 358–371 (VDKKHQQTHQDKKQ) show a composition bias toward basic and acidic residues. The stretch at 366-403 (HQDKKQTQQQQQQQQQQQQQQQQQQQQQQQQQQQQQTQ) forms a coiled coil. The segment covering 372-463 (TQQQQQQQQQ…NNTPTATNTN (92 aa)) has biased composition (low complexity). Polar residues predominate over residues 516-529 (TNKSMNKSGSNIST). 3 stretches are compositionally biased toward low complexity: residues 530–544 (TPVN…NGTP), 637–676 (PTQL…TPST), and 683–694 (TTTPITTTILTE). Positions 691 to 730 (ILTENKSDDKEKEKEKEKEKVDEKEKEKEKEKSDEKDKDQ) form a coiled coil. Basic and acidic residues predominate over residues 695-741 (NKSDDKEKEKEKEKEKVDEKEKEKEKEKSDEKDKDQSSTLVEKKDES). Low complexity predominate over residues 742 to 763 (SSSSNTTTTTTNTTNNNNNNTT). The span at 930–957 (QPQGGVVQPSAGGAPKTMYQQQQQQQQQ) shows a compositional bias: low complexity. The span at 960–969 (QPGGPMGVQR) shows a compositional bias: gly residues. Residues 974–984 (PPQQQPQQQQQ) show a composition bias toward low complexity. Over residues 1020–1031 (YAVPHPQYPMPP) the composition is skewed to pro residues. Positions 1062–1076 (QVVSQNSPQQDSPSN) are enriched in low complexity.

It belongs to the ataxin-2 family.

In Dictyostelium discoideum (Social amoeba), this protein is Ataxin-2 homolog (atxn2).